A 499-amino-acid chain; its full sequence is Heparin cofactor 2 (499 aa).

Residues 1–19 (MKHSLNALLIFLIITSAWG) form the signal peptide. Phosphoserine; by FAM20C is present on Ser-37. Asn-49 is a glycosylation site (N-linked (GlcNAc...) (complex) asparagine). The interval 68–79 (DWIPEGEEDDDY) is chemotactic activity. 2 tandem repeats follow at residues 73–83 (GEEDDDYLDLE) and 87–97 (SEDDDYIDIVD). Residues 73 to 97 (GEEDDDYLDLEKIFSEDDDYIDIVD) are 2 X 11 AA approximate repeats, Asp/Glu-rich (acidic) (hirudin-like). Tyr-79 and Tyr-92 each carry sulfotyrosine. A glycan (N-linked (GlcNAc...) asparagine) is linked at Asn-188. The segment at 192-212 (KYEITTIHNLFRKLTHRLFRR) is glycosaminoglycan-binding site. Asn-387 carries N-linked (GlcNAc...) asparagine glycosylation.

It belongs to the serpin family. In terms of processing, phosphorylated by FAM20C in the extracellular medium. In terms of tissue distribution, expressed predominantly in liver. Also present in plasma. Expressed in plasma (at protein level). Expressed in liver.

In terms of biological role, thrombin inhibitor activated by the glycosaminoglycans, heparin or dermatan sulfate. In the presence of the latter, HC-II becomes the predominant thrombin inhibitor in place of antithrombin III (AT-III). Also inhibits chymotrypsin, but in a glycosaminoglycan-independent manner. Peptides at the N-terminal of HC-II have chemotactic activity for both monocytes and neutrophils. Functionally, shows negligible inhibition, in vitro, of thrombin and tPA and no inhibition of factor Xa, in vitro. This chain is Heparin cofactor 2 (SERPIND1), found in Homo sapiens (Human).